Consider the following 188-residue polypeptide: Probable chorismate pyruvate-lyase (188 aa).

Substrate is bound by residues Arg90, Leu128, and Glu175.

It belongs to the UbiC family.

The protein resides in the cytoplasm. The enzyme catalyses chorismate = 4-hydroxybenzoate + pyruvate. It functions in the pathway cofactor biosynthesis; ubiquinone biosynthesis. Its function is as follows. Removes the pyruvyl group from chorismate, with concomitant aromatization of the ring, to provide 4-hydroxybenzoate (4HB) for the ubiquinone pathway. The polypeptide is Probable chorismate pyruvate-lyase (Marinobacter nauticus (strain ATCC 700491 / DSM 11845 / VT8) (Marinobacter aquaeolei)).